Consider the following 72-residue polypeptide: Defensin-like protein 230 (72 aa).

An N-terminal signal peptide occupies residues 1–27 (MEKKSLACLSFLLLVLFVAQEIVVSEA). 4 disulfides stabilise this stretch: Cys-30/Cys-72, Cys-41/Cys-60, Cys-45/Cys-66, and Cys-49/Cys-68.

This sequence belongs to the DEFL family.

The protein resides in the secreted. The protein is Defensin-like protein 230 (PI230) of Pisum sativum (Garden pea).